Here is a 214-residue protein sequence, read N- to C-terminus: Rhodanese-like domain-containing protein 10 (214 aa).

In terms of domain architecture, Rhodanese spans 58 to 182; the sequence is ASEGYILLDV…VSEGDFPEIE (125 aa). The active-site Cysteine persulfide intermediate is cysteine 142. The helical transmembrane segment at 190–206 threads the bilayer; that stretch reads ATIGGVSFYLLKLLVLL.

Its subcellular location is the membrane. The protein is Rhodanese-like domain-containing protein 10 (STR10) of Arabidopsis thaliana (Mouse-ear cress).